The sequence spans 421 residues: Putative bifunctional polynucleotide phosphatase/kinase (421 aa).

The segment at 25 to 231 is phosphatase; that stretch reads DSYLKGIINN…SENLKTNYKL (207 aa). A kinase region spans residues 235 to 415; sequence NPTEIIDEIE…DDPKWKRSFM (181 aa). ATP is bound at residue 265–272; the sequence is GQPGSGKS.

This sequence in the N-terminal section; belongs to the DNA 3' phosphatase family.

The enzyme catalyses a 3'end (2'-deoxyribonucleotide 3'-phosphate)-DNA + H2O = a 3'-end 2'-deoxyribonucleotide-DNA + phosphate. It carries out the reaction a 5'-end dephospho-2'-deoxyribonucleoside-DNA + ATP = a 5'-end 5'-phospho-2'-deoxyribonucleoside-DNA + ADP + H(+). The chain is Putative bifunctional polynucleotide phosphatase/kinase from Acanthamoeba polyphaga mimivirus (APMV).